Consider the following 323-residue polypeptide: Acetyl-coenzyme A carboxylase carboxyl transferase subunit alpha (323 aa).

Residues 39-293 (RLSKKSQQLT…RRALGDSLRQ (255 aa)) form the CoA carboxyltransferase C-terminal domain.

It belongs to the AccA family. Acetyl-CoA carboxylase is a heterohexamer composed of biotin carboxyl carrier protein (AccB), biotin carboxylase (AccC) and two subunits each of ACCase subunit alpha (AccA) and ACCase subunit beta (AccD).

It localises to the cytoplasm. The catalysed reaction is N(6)-carboxybiotinyl-L-lysyl-[protein] + acetyl-CoA = N(6)-biotinyl-L-lysyl-[protein] + malonyl-CoA. Its pathway is lipid metabolism; malonyl-CoA biosynthesis; malonyl-CoA from acetyl-CoA: step 1/1. Its function is as follows. Component of the acetyl coenzyme A carboxylase (ACC) complex. First, biotin carboxylase catalyzes the carboxylation of biotin on its carrier protein (BCCP) and then the CO(2) group is transferred by the carboxyltransferase to acetyl-CoA to form malonyl-CoA. The sequence is that of Acetyl-coenzyme A carboxylase carboxyl transferase subunit alpha from Burkholderia pseudomallei (strain 1106a).